The chain runs to 86 residues: Omega-theraphotoxin-Hhn1f 3 (86 aa).

The first 21 residues, 1–21 (MKSIVFVALFGLALLAVACSA), serve as a signal peptide directing secretion. Positions 22–50 (SEDAHKELLKEVVRAMVVDKTDAVQAEER) are excised as a propeptide. Cystine bridges form between Cys52/Cys66, Cys59/Cys71, and Cys65/Cys78.

This sequence belongs to the neurotoxin 10 (Hwtx-1) family. 17 (Hntx-9) subfamily. In terms of tissue distribution, expressed by the venom gland.

The protein localises to the secreted. Ion channel inhibitor. This chain is Omega-theraphotoxin-Hhn1f 3, found in Cyriopagopus hainanus (Chinese bird spider).